The chain runs to 365 residues: MSWNTFGRVLRMTTWGESHGPAIGCVLDGCPPGIALSESDIQPFLDARRPGQNKFTTQRKEPDQVRILSGVFDGQDGVQRTTGTPISLMIENVDQRSKDYSEVAKAYRPGHADYAYDAKYGFRDYRGGGRSSARETAMRVAAGAVARLIIPDVTITGYVREIGGDAIDAARFDSDAIGENPFWCPDADAAKRWETLVDEARKAGSSLGAVVECVAEGVPAGWGAPIYAKLDGDLGGAMMSINAVKGVEIGDGFDAARLSGEQNADPMRPAAEGSDAGPRFEANHAGGISGGISTGQPVTCKVAFKPTSSILTPVETIDTEGNATEIRTKGRHDPCVGIRGTPVVEAMMALVLADHMLLHRAQCGQ.

Arg48 is an NADP(+) binding site. FMN-binding positions include 130 to 132, 242 to 243, Gly290, 305 to 309, and Arg331; these read RSS, NA, and KPTSS.

Belongs to the chorismate synthase family. Homotetramer. The cofactor is FMNH2.

It catalyses the reaction 5-O-(1-carboxyvinyl)-3-phosphoshikimate = chorismate + phosphate. It functions in the pathway metabolic intermediate biosynthesis; chorismate biosynthesis; chorismate from D-erythrose 4-phosphate and phosphoenolpyruvate: step 7/7. Functionally, catalyzes the anti-1,4-elimination of the C-3 phosphate and the C-6 proR hydrogen from 5-enolpyruvylshikimate-3-phosphate (EPSP) to yield chorismate, which is the branch point compound that serves as the starting substrate for the three terminal pathways of aromatic amino acid biosynthesis. This reaction introduces a second double bond into the aromatic ring system. This is Chorismate synthase from Erythrobacter litoralis (strain HTCC2594).